Consider the following 160-residue polypeptide: Ribosomal RNA large subunit methyltransferase H (160 aa).

Residues Leu76, Gly108, and 127–132 (LGKMTW) contribute to the S-adenosyl-L-methionine site.

It belongs to the RNA methyltransferase RlmH family. As to quaternary structure, homodimer.

The protein resides in the cytoplasm. It catalyses the reaction pseudouridine(1915) in 23S rRNA + S-adenosyl-L-methionine = N(3)-methylpseudouridine(1915) in 23S rRNA + S-adenosyl-L-homocysteine + H(+). Functionally, specifically methylates the pseudouridine at position 1915 (m3Psi1915) in 23S rRNA. This chain is Ribosomal RNA large subunit methyltransferase H, found in Rhizobium etli (strain CIAT 652).